Consider the following 157-residue polypeptide: Large ribosomal subunit protein eL29 (157 aa).

Positions 1–26 (MAKSKNHTTHNQSRKWHRNGIKKPRS) are enriched in basic residues. The tract at residues 1-32 (MAKSKNHTTHNQSRKWHRNGIKKPRSQRYESL) is disordered. Lys-5 is subject to N6-methyllysine. A Phosphoserine modification is found at Ser-31. An N6-acetyllysine modification is found at Lys-33. Residues 121–157 (PKAKAKAKDQTKAQAAAPASIPAQAPKGAQATTKATE) are disordered. Over residues 132–147 (KAQAAAPASIPAQAPK) the composition is skewed to low complexity. A Phosphoserine modification is found at Ser-140.

It belongs to the eukaryotic ribosomal protein eL29 family. In terms of assembly, component of the large ribosomal subunit.

It localises to the cytoplasm. In terms of biological role, component of the large ribosomal subunit. The ribosome is a large ribonucleoprotein complex responsible for the synthesis of proteins in the cell. This is Large ribosomal subunit protein eL29 (RPL29) from Macaca fascicularis (Crab-eating macaque).